Consider the following 399-residue polypeptide: Phosphoglycerate kinase (399 aa).

Residues 21-23, Arg-36, 59-62, Arg-120, and Arg-158 each bind substrate; these read DFN and HLGR. Residues Lys-209, Gly-297, Glu-328, and 355–358 contribute to the ATP site; that span reads GGDS.

This sequence belongs to the phosphoglycerate kinase family. In terms of assembly, monomer.

The protein resides in the cytoplasm. The catalysed reaction is (2R)-3-phosphoglycerate + ATP = (2R)-3-phospho-glyceroyl phosphate + ADP. It participates in carbohydrate degradation; glycolysis; pyruvate from D-glyceraldehyde 3-phosphate: step 2/5. The polypeptide is Phosphoglycerate kinase (Streptococcus thermophilus (strain ATCC BAA-250 / LMG 18311)).